The sequence spans 514 residues: Ammonium transporter 1 member 2 (514 aa).

11 consecutive transmembrane segments (helical) span residues 56–76, 91–111, 140–160, 165–185, 212–232, 257–277, 291–313, 328–348, 351–371, 380–400, and 431–451; these read LLFS…LCAG, VLDA…FAFG, FFLY…GSIA, FVAY…TVSH, FAGS…GALV, VVLG…GSFL, GQWS…AALT, IDVC…CAVV, WAAI…NLLA, LEAA…TGLF, and IVQI…LFYG. At threonine 472 the chain carries Phosphothreonine.

Belongs to the ammonia transporter channel (TC 1.A.11.2) family. High expression in root.

Its subcellular location is the membrane. Its function is as follows. Ammonium transporter probably involved in ammonium uptake from the soil. The chain is Ammonium transporter 1 member 2 (AMT1-2) from Arabidopsis thaliana (Mouse-ear cress).